Consider the following 79-residue polypeptide: Panulirin (79 aa).

The N-terminal stretch at methionine 1–glycine 22 is a signal peptide. Residues aspartate 23–proline 26 constitute a propeptide that is removed on maturation. Intrachain disulfides connect cysteine 33–cysteine 63, cysteine 40–cysteine 56, and cysteine 46–cysteine 64. The propeptide occupies glutamine 75–alanine 79.

In terms of assembly, monomer. In terms of processing, contains 3 disulfide bonds. As to expression, expressed in hemocytes (at protein level).

Its function is as follows. Involved in the melanization cascade in response to lipopolysaccharide (LPS). In vitro, reversibly and competitively inhibits trypsin (Ki=8.6 nM) but not serine proteases chymotrypsin, elastase, subtilisin, thrombin and plasmin, cysteine peptidase papain or metallopeptidase carboxypeptidase A. The protein is Panulirin of Panulirus argus (Caribbean spiny lobster).